The following is a 613-amino-acid chain: Proteasome-associated ATPase (613 aa).

A disordered region spans residues 1–29 (MSESERSEGFPEGFAGAGSGSLSSEDAAE). The stretch at 23 to 100 (SSEDAAELEA…LREEVDRLGQ (78 aa)) forms a coiled coil. Position 300 to 305 (300 to 305 (GCGKTL)) interacts with ATP. Lys-595 participates in a covalent cross-link: Isoglutamyl lysine isopeptide (Lys-Gln) (interchain with Q-Cter in protein Pup). Residues 612–613 (YL) are docks into pockets in the proteasome alpha-ring.

Belongs to the AAA ATPase family. Homohexamer. Assembles into a hexameric ring structure that caps the 20S proteasome core. Strongly interacts with the prokaryotic ubiquitin-like protein Pup through a hydrophobic interface; the interacting region of ARC lies in its N-terminal coiled-coil domain. There is one Pup binding site per ARC hexamer ring. Upon ATP-binding, the C-terminus of ARC interacts with the alpha-rings of the proteasome core, possibly by binding to the intersubunit pockets.

It participates in protein degradation; proteasomal Pup-dependent pathway. ATPase which is responsible for recognizing, binding, unfolding and translocation of pupylated proteins into the bacterial 20S proteasome core particle. May be essential for opening the gate of the 20S proteasome via an interaction with its C-terminus, thereby allowing substrate entry and access to the site of proteolysis. Thus, the C-termini of the proteasomal ATPase may function like a 'key in a lock' to induce gate opening and therefore regulate proteolysis. This is Proteasome-associated ATPase from Mycolicibacterium smegmatis (strain ATCC 700084 / mc(2)155) (Mycobacterium smegmatis).